Reading from the N-terminus, the 189-residue chain is Glycerol-3-phosphate acyltransferase (189 aa).

4 consecutive transmembrane segments (helical) span residues 1–21, 77–97, 111–131, and 151–171; these read MFWL…AIVL, LQEQ…PVYF, MLMG…LLTF, and LLAW…VMIV.

The protein belongs to the PlsY family. As to quaternary structure, probably interacts with PlsX.

It is found in the cell inner membrane. It catalyses the reaction an acyl phosphate + sn-glycerol 3-phosphate = a 1-acyl-sn-glycero-3-phosphate + phosphate. It participates in lipid metabolism; phospholipid metabolism. Its function is as follows. Catalyzes the transfer of an acyl group from acyl-phosphate (acyl-PO(4)) to glycerol-3-phosphate (G3P) to form lysophosphatidic acid (LPA). This enzyme utilizes acyl-phosphate as fatty acyl donor, but not acyl-CoA or acyl-ACP. This Pseudomonas putida (strain W619) protein is Glycerol-3-phosphate acyltransferase.